An 831-amino-acid polypeptide reads, in one-letter code: Translation initiation factor IF-2 (831 aa).

Positions 116–157 (IEPLETDKEVEQKQQNTEENKVEVSAKIVQDDEDIPSQIPKK) are disordered. Over residues 117–139 (EPLETDKEVEQKQQNTEENKVEV) the composition is skewed to basic and acidic residues. A tr-type G domain is found at 329–499 (TRAPVVTVMG…LLIAEMQDLK (171 aa)). The G1 stretch occupies residues 338–345 (GHVDHGKT). 338–345 (GHVDHGKT) is a binding site for GTP. Residues 363–367 (GITQH) form a G2 region. The segment at 385-388 (DTPG) is G3. GTP is bound by residues 385 to 389 (DTPGH) and 439 to 442 (NKID). Positions 439–442 (NKID) are G4. Residues 475 to 477 (SAL) form a G5 region.

This sequence belongs to the TRAFAC class translation factor GTPase superfamily. Classic translation factor GTPase family. IF-2 subfamily.

The protein resides in the cytoplasm. In terms of biological role, one of the essential components for the initiation of protein synthesis. Protects formylmethionyl-tRNA from spontaneous hydrolysis and promotes its binding to the 30S ribosomal subunits. Also involved in the hydrolysis of GTP during the formation of the 70S ribosomal complex. This Rickettsia conorii (strain ATCC VR-613 / Malish 7) protein is Translation initiation factor IF-2.